A 401-amino-acid chain; its full sequence is Rho-N domain-containing protein 1, chloroplastic (401 aa).

The transit peptide at 1 to 63 (MAMSGTFHLT…VPNRSSFVCR (63 aa)) directs the protein to the chloroplast. 2 disordered regions span residues 73–129 (PDFS…PGPR) and 180–361 (KHSG…EEAV). Composition is skewed to polar residues over residues 102–126 (DMLS…TSSP), 210–223 (TGNL…DNNA), and 240–265 (PRSQ…VTWT). The segment covering 266–290 (QKKDTVELHDEPEHEPAYEHEHEPE) has biased composition (basic and acidic residues). The span at 339 to 358 (LSDDDESLDDADEDSDEAEE) shows a compositional bias: acidic residues. A coiled-coil region spans residues 339 to 371 (LSDDDESLDDADEDSDEAEEEAVKDLSELKLVE).

In terms of assembly, homodimer or homomultimer. Part of a chloroplastic degradosome-like complex. Interacts with RNE.

The protein resides in the plastid. It localises to the chloroplast. In terms of biological role, binds to and supports processing of specific plastid RNAs. Associates via its C-terminal Rho-N domain to single stranded regions of 16S and 23S rRNAs or to rbcL mRNAs. May be involved in targeting transcripts to RNases such as RNE or RNase J. The sequence is that of Rho-N domain-containing protein 1, chloroplastic (RHON1) from Arabidopsis thaliana (Mouse-ear cress).